We begin with the raw amino-acid sequence, 533 residues long: Nitrogen fixation protein AnfA (533 aa).

The a domain stretch occupies residues 33 to 193 (ILYKISQIIT…PLVELYLIEN (161 aa)). The GAF domain maps to 46-186 (DLADALSIVL…MIATMIAPLV (141 aa)). Positions 219–448 (IIGNSKPMQE…LENVMERAVI (230 aa)) constitute a Sigma-54 factor interaction domain. ATP is bound by residues 247-254 (GESGVGKE) and 310-319 (ADGGTIFLDE). A DNA-binding region (H-T-H motif) is located at residues 501-520 (IGEAAKELGLARRMLGVRME).

Its function is as follows. AnfA is essential for nitrogen fixation under Mo- and V-deficient conditions. It is required for the regulation of nitrogenase 3 transcription. Interacts with sigma-54. The polypeptide is Nitrogen fixation protein AnfA (anfA) (Azotobacter vinelandii).